The chain runs to 311 residues: Splicing factor spf30 (311 aa).

The 64-residue stretch at 76–139 (DFTPGNLVMA…KAMPEEKRQE (64 aa)) folds into the Tudor domain. 2 disordered regions span residues 154 to 183 (RSTPVREPTKAISVASMSTSPSNYASRASS) and 276 to 311 (STEDFPGRTNPKNFGNVARSGHREKHIYNYREDEDS). Residues 168-183 (ASMSTSPSNYASRASS) show a composition bias toward polar residues. Position 173 is a phosphoserine (serine 173). Residues 301–311 (HIYNYREDEDS) are compositionally biased toward basic and acidic residues.

This sequence belongs to the SMN family. As to quaternary structure, associates with spliceosomes.

Its subcellular location is the nucleus. Involved in spliceosome assembly. The polypeptide is Splicing factor spf30 (spf30) (Schizosaccharomyces pombe (strain 972 / ATCC 24843) (Fission yeast)).